The following is a 420-amino-acid chain: UPF0053 protein HI_0107 (420 aa).

One can recognise a CNNM transmembrane domain in the interval 2–190; the sequence is DSIPLSTLFI…GEATPNEQHP (189 aa). Transmembrane regions (helical) follow at residues 3–23, 65–85, 92–112, and 126–146; these read SIPL…SAYF, FILI…TVIG, AGVA…SEIF, and FFSS…VWLM. CBS domains follow at residues 208-268 and 273-333; these read MVPR…KNEF and LIRA…FTTS.

Belongs to the UPF0053 family.

It is found in the cell membrane. The chain is UPF0053 protein HI_0107 from Haemophilus influenzae (strain ATCC 51907 / DSM 11121 / KW20 / Rd).